Reading from the N-terminus, the 453-residue chain is Omega-3 fatty acid desaturase, chloroplastic (453 aa).

The Histidine box-1 motif lies at 171-175 (HDCGH). The short motif at 207 to 211 (HRTHH) is the Histidine box-2 element. The short motif at 374–378 (HVIHH) is the Histidine box-3 element.

It belongs to the fatty acid desaturase type 1 family.

It localises to the plastid. Its subcellular location is the chloroplast membrane. Its pathway is lipid metabolism; polyunsaturated fatty acid biosynthesis. Chloroplast omega-3 fatty acid desaturase introduces the third double bond in the biosynthesis of 16:3 and 18:3 fatty acids, important constituents of plant membranes. It is thought to use ferredoxin as an electron donor and to act on fatty acids esterified to galactolipids, sulfolipids and phosphatidylglycerol. The polypeptide is Omega-3 fatty acid desaturase, chloroplastic (FAD7) (Glycine max (Soybean)).